A 127-amino-acid chain; its full sequence is Small ribosomal subunit protein bS6 (127 aa).

The disordered stretch occupies residues 104–127 (QGAEKGKSSRKEKVAAEAEASEEA). Positions 107 to 119 (EKGKSSRKEKVAA) are enriched in basic and acidic residues.

It belongs to the bacterial ribosomal protein bS6 family.

Functionally, binds together with bS18 to 16S ribosomal RNA. In Coxiella burnetii (strain CbuG_Q212) (Coxiella burnetii (strain Q212)), this protein is Small ribosomal subunit protein bS6.